Here is a 494-residue protein sequence, read N- to C-terminus: Aspartyl/glutamyl-tRNA(Asn/Gln) amidotransferase subunit B (494 aa).

It belongs to the GatB/GatE family. GatB subfamily. As to quaternary structure, heterotrimer of A, B and C subunits.

The catalysed reaction is L-glutamyl-tRNA(Gln) + L-glutamine + ATP + H2O = L-glutaminyl-tRNA(Gln) + L-glutamate + ADP + phosphate + H(+). The enzyme catalyses L-aspartyl-tRNA(Asn) + L-glutamine + ATP + H2O = L-asparaginyl-tRNA(Asn) + L-glutamate + ADP + phosphate + 2 H(+). In terms of biological role, allows the formation of correctly charged Asn-tRNA(Asn) or Gln-tRNA(Gln) through the transamidation of misacylated Asp-tRNA(Asn) or Glu-tRNA(Gln) in organisms which lack either or both of asparaginyl-tRNA or glutaminyl-tRNA synthetases. The reaction takes place in the presence of glutamine and ATP through an activated phospho-Asp-tRNA(Asn) or phospho-Glu-tRNA(Gln). This chain is Aspartyl/glutamyl-tRNA(Asn/Gln) amidotransferase subunit B, found in Trichodesmium erythraeum (strain IMS101).